Reading from the N-terminus, the 475-residue chain is Methyltransferase-like protein 25B (475 aa).

The stretch at 185 to 210 (NKRLVARAQRLDQELLQALDKMEKRH) forms a coiled coil. A helical transmembrane segment spans residues 406 to 426 (VVAFFSLALLLAPLVETLILL).

This sequence belongs to the METTL25 family.

Its subcellular location is the membrane. The sequence is that of Methyltransferase-like protein 25B from Rattus norvegicus (Rat).